Reading from the N-terminus, the 407-residue chain is MDGFSRRRMLMTGGALGAVGALGAATRALARPLWTWSPSASVAGTGVGVDPEYVWDEEADPVLAAVIDRGEVPAVNALLKQWTRNDQALPGGLPGDLREFMEHARRMPSWADKAALDRGAQFSKTKGIYVGALYGLGSGLMSTAIPRESRAVYYSKGGADMKDRIAKTARLGYDIGDLDAYLPHGSMIVTAVKTRMVHAAVRHLLPQSPAWSQTSGGQKIPISQADIMVTWHSLATFVMRKMKQWGVRVNTADAEAYLHVWQVSAHMLGVSDEYIPATWDAANAQSKQVLDPILAHTPEGEALTEVLLGIVAELDAGLTRPLIGAFSRYTLGGEVGDMIGLAKQPVLERLIATAWPLLVAFREGLIPLPAVPAVLWTLEEALRKFVLLFLSEGRRIAIDIPDVNRPS.

A signal peptide (tat-type signal) is located at residues 1 to 30 (MDGFSRRRMLMTGGALGAVGALGAATRALA). His-198 contacts heme.

The protein belongs to the rubber oxygenase Lcp family. Heme b serves as cofactor. In terms of processing, exported by the Tat system. The position of the signal peptide cleavage has not been experimentally proven.

It is found in the secreted. It functions in the pathway biopolymer metabolism. Functionally, involved in the initial step of rubber degradation. Catalyzes the oxidative C-C cleavage of poly(cis-1,4-isoprene) in synthetic as well as in natural rubber by the addition of oxygen (O2) to the double bonds, leading to a mixture of oligonucleotide-isoprenoids with terminal keto and aldehyde groups (endo-type cleavage). The cleavage products are of different lengths, ranging from C20 (four isoprene units) to higher oligo-isoprenoids. Is not able to cleave low-molecular-weight substrate analogs with isoprenoid structure such as squalene (1,4-trans-isoprenoid), carotenoids, or alpha-tocopherol. The protein is Rubber oxygenase of Streptomyces sp. (strain K30).